The following is a 338-amino-acid chain: Replication factor C small subunit (338 aa).

53–60 (GPPGVGKT) contributes to the ATP binding site.

The protein belongs to the activator 1 small subunits family. RfcS subfamily. Heteromultimer composed of small subunits (RfcS) and large subunits (RfcL).

Part of the RFC clamp loader complex which loads the PCNA sliding clamp onto DNA. This is Replication factor C small subunit from Methanosarcina acetivorans (strain ATCC 35395 / DSM 2834 / JCM 12185 / C2A).